The chain runs to 941 residues: MPDASLFNGTSFITLFAPNISLLQASIDFYTNFLGFAIRKNSNQKLFWLQLEEDQNNVSIQLILDPEHAASVSQIDQNIRNLTRSLYRKDWRSIQSNIAFKSSSLSKLVKLLKDGGHPVQQSPNEISPFEVYTVDPLGSLIGFSGFKNPFAVNERSLLPKVSEEKAYRAEDDSEKLLNPVRKTIGVMTSGGDSPGMNPFVRAVVRAGIYKGCKVFCIHEGYEGLVRGGEKYIKETQWHDVRGWLVEGGTNIGTARCKEFRERSGRLKACKNMIDMGIDALIVCGGDGSLTGADRFRSEWPSLIEELLQTEQISQQQFNTHQNLNICGAVGSIDNDMSSTDATIGAFSSLDRICRAIDYIDATANSHSRAFIVEVMGRHCGWLGLLAGLATSADYILIPEKPASSREWQDQMCDIVGKHRARGKRKTIVIVAEGAISNDLSPISCDQVKDVLVNRLGLDTRVTTLGHVQRGGTAVAFDRIYATLQGVEAVNAVLECDADTPSPMIAIKEDQITRVPLVDAVELTQQVAKSIESRNFKKAISLRDSEFVEHMKNFISTNSADHVPPSLPLEKRKKIAIINVGAPAGGMNSAVYSMATYCMSRGHVPYAIHNGFSGLARHESVRSINWLDIEGWGSLGGSEIGTNRTLPNDADIGMIAYFFEKYGFDGLILVGGFEAFISLHQLERARINYPSLRIPLVLIPATISNNVPGTEYSLGSDTCLNSFMEYCDVIKQSAAATRNRVFVVEVQGGNSGYIATHAQLACGAQISYVPEEGISLAQLEMDINSLKESFANDQGKTKSGRLILKSENASKVLTTEVISTIIDDEASGRFDSKTAIPGHVQQGGIPSPMDRVRASRFAIRAVSFIERHSDRCQTFKNSISFRQTDEITSTAVVLGIHKSQLRFTPIRQLYDFESDVPRRMRKNIFWSNVREISDMLSGRTSL.

The interval 2–558 (PDASLFNGTS…HMKNFISTNS (557 aa)) is N-terminal catalytic PFK domain 1. ATP-binding positions include Gly-191, 255 to 256 (RC), and 285 to 288 (GDGS). Asp-286 lines the Mg(2+) pocket. Beta-D-fructose 6-phosphate is bound by residues 331 to 333 (SID), Arg-368, and 375 to 377 (MGR). Asp-333 (proton acceptor) is an active-site residue. Residues Ile-395, 400–405 (KPASSR), and Gln-410 contribute to the ATP site. Beta-D-fructose 6-phosphate is bound by residues Glu-432, Arg-460, and 466–469 (HVQR). 557–558 (NS) lines the ATP pocket. Positions 559-572 (ADHVPPSLPLEKRK) are interdomain linker. Positions 573-941 (KIAIINVGAP…SDMLSGRTSL (369 aa)) are C-terminal regulatory PFK domain 2. Beta-D-fructose 2,6-bisphosphate-binding positions include Arg-643, 701–705 (TISNN), Arg-739, 746–748 (QGG), Glu-806, Lys-832, 838–841 (HVQQ), and Arg-918.

It belongs to the phosphofructokinase type A (PFKA) family. ATP-dependent PFK group I subfamily. Eukaryotic two domain clade 'E' sub-subfamily. As to quaternary structure, heterododecamer of 4 alpha, 4 beta and 4 gamma chains. Requires Mg(2+) as cofactor.

It localises to the cytoplasm. The enzyme catalyses beta-D-fructose 6-phosphate + ATP = beta-D-fructose 1,6-bisphosphate + ADP + H(+). It participates in carbohydrate degradation; glycolysis; D-glyceraldehyde 3-phosphate and glycerone phosphate from D-glucose: step 3/4. With respect to regulation, allosterically activated by ADP, AMP, or fructose 2,6-bisphosphate, and allosterically inhibited by ATP or citrate. Functionally, catalyzes the phosphorylation of D-fructose 6-phosphate to fructose 1,6-bisphosphate by ATP, the first committing step of glycolysis. The polypeptide is ATP-dependent 6-phosphofructokinase subunit beta (PFK2) (Komagataella pastoris (Yeast)).